The chain runs to 222 residues: Myosin regulatory light chain 2 (222 aa).

Residues 1 to 65 (MADEKKKVKK…RGSRKSKRAG (65 aa)) form a disordered region. Position 2 is an N-acetylalanine (Ala-2). Over residues 19-53 (TSETASEAASEAATPAPAATPAPAASATGSKRASG) the composition is skewed to low complexity. Phosphoserine is present on residues Ser-66 and Ser-67. EF-hand domains are found at residues 75 to 110 (KQIA…VGKI), 147 to 180 (DEDE…FGDK), and 181 to 216 (FTMK…KGEE). Asp-88, Asp-90, Asp-92, and Asp-99 together coordinate Ca(2+).

As to quaternary structure, myosin is a hexamer of 2 heavy chains and 4 light chains.

The chain is Myosin regulatory light chain 2 (Mlc2) from Drosophila melanogaster (Fruit fly).